The following is a 323-amino-acid chain: uncharacterized protein (323 aa).

Residues 1 to 21 are disordered; the sequence is MGSYYSTESTKSNESNETTNN. A lipid anchor (N-myristoyl glycine; by host) is attached at Gly-2.

This is an uncharacterized protein from Acanthamoeba polyphaga (Amoeba).